A 335-amino-acid polypeptide reads, in one-letter code: 2-keto-3-deoxygluconate permease (335 aa).

The next 10 helical transmembrane spans lie at 10–30 (IPGG…TAAP), 42–62 (GIIT…GASI), 77–97 (LVLT…QLLP), 100–120 (GIEV…AMDM), 141–161 (AFVL…LGSA), 163–183 (LASF…IGFA), 200–220 (QTLI…GVIL), 224–244 (LLGI…LIIA), 254–274 (TAGL…VIIA), and 289–309 (ALVA…TAMY).

This sequence belongs to the KdgT transporter family.

It localises to the cell inner membrane. It carries out the reaction 2-dehydro-3-deoxy-D-gluconate(in) + H(+)(in) = 2-dehydro-3-deoxy-D-gluconate(out) + H(+)(out). In terms of biological role, catalyzes the proton-dependent uptake of 2-keto-3-deoxygluconate (KDG) into the cell. The protein is 2-keto-3-deoxygluconate permease of Tolumonas auensis (strain DSM 9187 / NBRC 110442 / TA 4).